We begin with the raw amino-acid sequence, 382 residues long: Cytochrome b (382 aa).

4 helical membrane-spanning segments follow: residues 33–53 (FGSL…FLAM), 77–98 (WLVR…YTHI), 113–133 (WTVG…GYVL), and 178–198 (FFAF…IHLL). 2 residues coordinate heme b: histidine 83 and histidine 97. Residues histidine 182 and histidine 196 each coordinate heme b. Histidine 201 lines the a ubiquinone pocket. 4 helical membrane passes run 226 to 246 (LKDL…ALLT), 288 to 308 (LGGV…PFLQ), 320 to 340 (LTQL…WIGG), and 347 to 367 (FVSI…IIIP).

Belongs to the cytochrome b family. In terms of assembly, the cytochrome bc1 complex contains 3 respiratory subunits (MT-CYB, CYC1 and UQCRFS1), 2 core proteins (UQCRC1 and UQCRC2) and probably 6 low-molecular weight proteins. The cofactor is heme b.

It localises to the mitochondrion inner membrane. In terms of biological role, component of the ubiquinol-cytochrome c reductase complex (complex III or cytochrome b-c1 complex) that is part of the mitochondrial respiratory chain. The b-c1 complex mediates electron transfer from ubiquinol to cytochrome c. Contributes to the generation of a proton gradient across the mitochondrial membrane that is then used for ATP synthesis. The protein is Cytochrome b (mt-cyb) of Sigmops gracilis (Slender fangjaw).